The sequence spans 1180 residues: MNPYQNKNEYETLNASQKKLNISNNYTRYPIENSPKQLLQSTNYKDWLNMCQQNQQYGGDFETFIDSGELSAYTIVVGTVLTGFGFTTPLGLALIGFGTLIPVLFPAQDQSNTWSDFITQTKNIIKKEIASTYISNANKILNRSFNVISTYHNHLKTWENNPNPQNTQDVRTQIQLVHYHFQNVIPELVNSCPPNPSDCDYYNILVLSSYAQAANLHLTVLNQAVKFEAYLKNNRQFDYLEPLPTAIDYYPVLTKAIEDYTNYCVTTYKKGLNLIKTTPDSNLDGNINWNTYNTYRTKMTTAVLDLVALFPNYDVGKYPIGVQSELTREIYQVLNFEESPYKYYDFQYQEDSLTRRPHLFTWLDSLNFYEKAQTTPNNFFTSHYNMFHYTLDNISQKSSVFGNHNVTDKLKSLGLATNIYIFLLNVISLDNKYLNDYNNISKMDFFITNGTRLLEKELTAGSGQITYDVNKNIFGLPILKRRENQGNPTLFPTYDNYSHILSFIKSLSIPATYKTQVYTFAWTHSSVDPKNTIYTHLTTQIPAVKANSLGTASKVVQGPGHTGGDLIDFKDHFKITCQHSNFQQSYFIRIRYASNGSANTRAVINLSIPGVAELGMALNPTFSGTDYTNLKYKDFQYLEFSNEVKFAPNQNISLVFNRSDVYTNTTVLIDKIEFLPITRSIREDREKQKLETVQQIINTFYANPIKNTLQSELTDYDIDQAANLVECISEELYPKEKMLLLDEVKNAKQLSQSRNVLQNGDFESATLGWTTSDNITIQEDDPIFKGHYLHMSGARDIDGTIFPTYIFQKIDESKLKPYTRYLVRGFVGSSKDVELVVSRYGEEIDAIMNVPADLNYLYPSTFDCEGSNRCETSAVPANIGNTSDMLYSCQYDTGKKHVVCQDSHQFSFTIDTGALDTNENIGVWVMFKISSPDGYASLDNLEVIEEGPIDGEALSRVKHMEKKWNDQMEAKRSETQQAYDVAKQAIDALFTNVQDEALQFDTTLAQIQYAEYLVQSIPYVYNDWLSDVPGMNYDIYVELDARVAQARYLYDTRNIIKNGDFTQGVMGWHVTGNADVQQIDGVSVLVLSNWSAGVSQNVHLQHNHGYVLRVIAKKEGPGNGYVTLMDCEENQEKLTFTSCEEGYITKTVDVFPDTDRVRIEIGETEGSFYIESIELICMNE.

This sequence belongs to the delta endotoxin family.

Its function is as follows. Promotes colloidosmotic lysis by binding to the midgut epithelial cells of insects. This is Pesticidal crystal protein Cry4Aa (cry4Aa) from Bacillus thuringiensis subsp. israelensis.